Consider the following 124-residue polypeptide: Protein BEX3 (124 aa).

A disordered region spans residues 1–56; it reads MANVHQENEEMEQPLQNGQEDRPVGGGEGHQPAANNNNNNHNHNHNHHRRGQARRL. Over residues 42–53 the composition is skewed to basic residues; sequence NHNHNHHRRGQA. The segment at 81–106 is interaction with p75NTR/NGFR; the sequence is EMFMEEMREIRRKLRELQLRNCLRIL. The segment at 81-124 is interaction with 14-3-3 epsilon; it reads EMFMEEMREIRRKLRELQLRNCLRILMGELSNHHDHHDEFCLMP. A Nuclear export signal motif is present at residues 90–100; that stretch reads IRRKLRELQLR. The his cluster stretch occupies residues 113 to 117; the sequence is HHDHH. Residue C121 coordinates Zn(2+).

The protein belongs to the BEX family. In terms of assembly, self-associates. Binds to the DEATH domain of p75NTR/NGFR. Interacts with 14-3-3 epsilon (YWHAE). Interacts with DIABLO/SMAC. Ubiquitinated. Degraded by the proteasome. In terms of tissue distribution, widely expressed.

It localises to the nucleus. Its subcellular location is the cytoplasm. The protein resides in the cytosol. Functionally, may be a signaling adapter molecule involved in NGFR/p75NTR-mediated apoptosis induced by NGF. Plays a role in zinc-triggered neuronal death. In absence of reductive stress, acts as a pseudosubstrate for the CRL2(FEM1B) complex: associates with FEM1B via zinc, thereby preventing association between FEM1B and its substrates. The polypeptide is Protein BEX3 (Mus musculus (Mouse)).